A 478-amino-acid chain; its full sequence is Sodium-dependent phosphate transport protein 3 (478 aa).

Asparagine 28, asparagine 47, asparagine 56, and asparagine 69 each carry an N-linked (GlcNAc...) asparagine glycan. The next 10 membrane-spanning stretches (helical) occupy residues 98–118, 130–150, 183–203, 211–231, 273–293, 317–337, 341–361, 363–383, 405–425, and 442–462; these read ISYG…IFGA, SLLT…VIVI, SIAG…GGLI, FIFY…FTVI, LPLW…TIII, LPFI…DFLL, LLSL…LPSL, AVAL…LILI, YASF…IISS, and NVFF…LIFG.

Belongs to the major facilitator superfamily. Sodium/anion cotransporter family. As to expression, expressed in the liver, kidney, placenta, lung and thyroid (at protein level).

The protein localises to the apical cell membrane. The catalysed reaction is 3 Na(+)(out) + phosphate(out) = 3 Na(+)(in) + phosphate(in). It catalyses the reaction urate(out) + n chloride(in) = urate(in) + n chloride(out). Functionally, acts as a membrane potential-dependent organic anion transporter, the transport requires a low concentration of chloride ions. Mediates chloride-dependent transport of urate. Can actively transport inorganic phosphate into cells via Na(+) cotransport. The protein is Sodium-dependent phosphate transport protein 3 (Slc17a2) of Mus musculus (Mouse).